The sequence spans 277 residues: MAETLKEDSIMIREVWDYNLVEEFALIREIVDKFSYIAMDTEFPGVVLKPVATFKYNNDLNYRTLKENVDLLKLIQVGLTFSDENGNLPTCGTDKFCIWQFNFREFNIGEDIYASESIELLRQCGIDFKKNIEKGIDVVRFGELMMSSGIVLNDAISWVTFHGGYDFGYLVKLLTCKELPLKQADFFKLLYVYFPTVYDIKHLMTFCNGLFGGLNRLAELMGVERVGICHQAGSDSLLTLGSFRKLKERYFPGSTEKYTGVLYGLGVEDGTTTTVAN.

Positions 40, 42, 166, and 235 each coordinate a divalent metal cation.

It belongs to the CAF1 family. As to quaternary structure, component of the CCR4-NOT complex, at least composed of CRR4 and CAF1 proteins. A divalent metal cation serves as cofactor.

It localises to the nucleus. The protein localises to the cytoplasm. It carries out the reaction Exonucleolytic cleavage of poly(A) to 5'-AMP.. Its function is as follows. Ubiquitous transcription factor required for a diverse set of processes. It is a component of the CCR4 complex involved in the control of gene expression. The sequence is that of Probable CCR4-associated factor 1 homolog 10 (CAF1-10) from Arabidopsis thaliana (Mouse-ear cress).